The chain runs to 150 residues: Large ribosomal subunit protein uL11 (150 aa).

Positions 83-111 (AAGLKPQGKRNRAKGSEKPGRQTAGTVTA) are disordered.

Belongs to the universal ribosomal protein uL11 family. As to quaternary structure, part of the ribosomal stalk of the 50S ribosomal subunit. Interacts with L10 and the large rRNA to form the base of the stalk. L10 forms an elongated spine to which L12 dimers bind in a sequential fashion forming a multimeric L10(L12)X complex. In terms of processing, one or more lysine residues are methylated.

In terms of biological role, forms part of the ribosomal stalk which helps the ribosome interact with GTP-bound translation factors. This is Large ribosomal subunit protein uL11 from Paracoccus denitrificans (strain Pd 1222).